We begin with the raw amino-acid sequence, 400 residues long: KKSDYIKLYVRRVFITDDFHDMMPKYLNFVKGVVDSDDLPLNVSRETLQQHKLLKVIRKKLVRKTLDMIKKIADEKYNDTFWKEFGTNIKLGVIEDHSNRTRLAKLLRFQSSHHSTDITSLDQYVERMKEKQDKIYFMAGSSRKEAESSPFVERLLKKGYEVIYLTEPVDEYCIQALPEFDGKRFQNVAKEGVKFDESEKTKENREATEKEFEPLLNWMKDKALKDKIEKAVVSQRLTESPCALVASQYGWSGNMERIMKAQAYQTGKDISTNYYASQKKTFEINPRHPLIRDMLRRVKEDEDDKTVLDLAVVLFETATLRSGYLLPDTKAYADRIERMLRLSLNIDPEAQVEEEPEEEPEDTTEDTEQDEEEEVDAGTEEEEEEEQETAKESTAEKDEL.

K1 is modified (N6-succinyllysine). N-linked (GlcNAc...) asparagine glycosylation occurs at N42. At S44 the chain carries Phosphoserine. K76 carries the N6-acetyllysine modification. Residues N78 and N99 are each glycosylated (N-linked (GlcNAc...) asparagine). At K230 the chain carries N6-succinyllysine. Residues 346 to 400 (IDPEAQVEEEPEEEPEDTTEDTEQDEEEEVDAGTEEEEEEEQETAKESTAEKDEL) form a disordered region. The span at 350–387 (AQVEEEPEEEPEDTTEDTEQDEEEEVDAGTEEEEEEEQ) shows a compositional bias: acidic residues. Phosphothreonine is present on T379. The segment covering 388–400 (ETAKESTAEKDEL) has biased composition (basic and acidic residues). A Prevents secretion from ER motif is present at residues 397-400 (KDEL).

Belongs to the heat shock protein 90 family. As to quaternary structure, homodimer; disulfide-linked. Component of an EIF2 complex at least composed of CELF1/CUGBP1, CALR, CALR3, EIF2S1, EIF2S2, HSP90B1 and HSPA5. Part of a large chaperone multiprotein complex comprising DNAJB11, HSP90B1, HSPA5, HYOU, PDIA2, PDIA4, PDIA6, PPIB, SDF2L1, UGGT1 and very small amounts of ERP29, but not, or at very low levels, CALR nor CANX. Interacts with AIMP1; regulates its retention in the endoplasmic reticulum. Hyperglycosylated form interacts with OS9; promoting its degradation by the endoplasmic reticulum associated degradation (ERAD). Interacts with CNPY3. This interaction is disrupted in the presence of ATP. Interacts with TLR4 and TLR9, but not with TLR3. Interacts with MZB1 in a calcium-dependent manner. Interacts with METTL23. Interacts with IL1B; the interaction facilitates cargo translocation into the ERGIC. Interacts with EIF2AK3. Phosphorylated by CK2. Post-translationally, N-glycosylated cotranslationally at Asn-217 by STT3A-containing OST-A complex: this glycosylation is constitutive. In response to various stress, 5 additional facultative sites (Asn-62, Asn-107, Asn-445, Asn-481 and Asn-502) can be glycosylated post-translationally by STT3B-containing OST-B complex, leading to a hyperglycosylated form that is degraded by the ER-associated degradation (ERAD) pathway. In normal conditions, the OST-A complex together with CCDC134 prevent glycosylation at facultative sites during protein folding, thereby preventing hyperglycosylation. Mechanistically, nascent HSP90B1 is tethered during translation to a specialized CCDC134-containing translocon that forms a microenvironment for its folding, in which STT3A associates with the SRT pseudosubstrate motif, and prevents access to facultative glycosylation sites until folding is completed, rendering its facultative sites inaccessible to the OST-B complex.

It is found in the endoplasmic reticulum lumen. The protein localises to the sarcoplasmic reticulum lumen. Its subcellular location is the melanosome. It carries out the reaction ATP + H2O = ADP + phosphate + H(+). Functionally, ATP-dependent chaperone involved in the processing of proteins in the endoplasmic reticulum, regulating their transport. Together with MESD, acts as a modulator of the Wnt pathway by promoting the folding of LRP6, a coreceptor of the canonical Wnt pathway. When associated with CNPY3, required for proper folding of Toll-like receptors. Promotes folding and trafficking of TLR4 to the cell surface. May participate in the unfolding of cytosolic leaderless cargos (lacking the secretion signal sequence) such as the interleukin 1/IL-1 to facilitate their translocation into the ERGIC (endoplasmic reticulum-Golgi intermediate compartment) and secretion; the translocation process is mediated by the cargo receptor TMED10. This chain is Endoplasmin (HSP90B1), found in Mesocricetus auratus (Golden hamster).